The following is a 206-amino-acid chain: FMN-dependent NADH:quinone oxidoreductase (206 aa).

Residues Ser10 and 15–17 (SVS) contribute to the FMN site.

The protein belongs to the azoreductase type 1 family. As to quaternary structure, homodimer. FMN is required as a cofactor.

The enzyme catalyses 2 a quinone + NADH + H(+) = 2 a 1,4-benzosemiquinone + NAD(+). It catalyses the reaction N,N-dimethyl-1,4-phenylenediamine + anthranilate + 2 NAD(+) = 2-(4-dimethylaminophenyl)diazenylbenzoate + 2 NADH + 2 H(+). Functionally, quinone reductase that provides resistance to thiol-specific stress caused by electrophilic quinones. Also exhibits azoreductase activity. Catalyzes the reductive cleavage of the azo bond in aromatic azo compounds to the corresponding amines. The chain is FMN-dependent NADH:quinone oxidoreductase from Acidobacterium capsulatum (strain ATCC 51196 / DSM 11244 / BCRC 80197 / JCM 7670 / NBRC 15755 / NCIMB 13165 / 161).